Reading from the N-terminus, the 158-residue chain is UPF0262 protein R00612 (158 aa).

It belongs to the UPF0262 family.

The protein is UPF0262 protein R00612 of Rhizobium meliloti (strain 1021) (Ensifer meliloti).